A 313-amino-acid polypeptide reads, in one-letter code: WD repeat-containing protein 82 (313 aa).

6 WD repeats span residues 19 to 58 (ENSD…PKRT), 105 to 144 (GHSK…CQGL), 146 to 184 (HLQG…KGPF), 192 to 231 (DRTC…VMHT), 236 to 276 (ANSK…KVAV), and 280 to 313 (KHTG…TIDD).

This sequence belongs to the WD repeat SWD2 family. Component of the SET1/COMPASS complex, at least composed of the catalytic subunit (SETD1A or SETD1B), WDR5, WDR82, RBBP5, ASH2L/ASH2, CXXC1/CFP1, HCFC1 and DPY30. Component of the PNUTS-PP1 phosphatase complex, composed of PPP1R10/PNUTS, TOX4, WDR82, and PPP1CA or PPP1CB or PPP1CC. Associated with multiple protein complexes including an RNA polymerase II complex, MLL3/MLL4 complex and a chaperonin-containing TCP1 complex. Interacts with SETD1B (via N-terminal region); the interaction is direct. Interacts with SETD1A (via N-terminal region); the interaction is direct. Interacts with CUL4B. Interacts with RBBP5. Interacts with POLR2B. Interacts with hyperphosphorylated C-terminal domain (CTD) of RNA polymerase II large subunit (POLR2A). Binds specifically to CTD heptad repeats phosphorylated on 'Ser-5' of each heptad. SETD1A enhances its interaction with POLR2A. Interacts with PPP1R10/PNUTS. Interacts with PPP1CA in the presence of PPP1R10/PNUTS. Interacts with ZC3H4; interaction is independent of the SET1 complex and promotes transcription termination of long non-coding RNAs (lncRNAs).

It localises to the nucleus. The protein resides in the chromosome. It is found in the cytoplasm. Regulatory component of the SET1/COMPASS complex implicated in the tethering of this complex to transcriptional start sites of active genes. Facilitates histone H3 'Lys-4' methylation (H3K4me) via recruitment of the SETD1A or SETD1B to the 'Ser-5' phosphorylated C-terminal domain (CTD) of RNA polymerase II large subunit (POLR2A). Component of the PNUTS-PP1 protein phosphatase complex, a protein phosphatase 1 (PP1) complex that promotes RNA polymerase II transcription pause-release, allowing transcription elongation. PNUTS-PP1 also plays a role in the control of chromatin structure and cell cycle progression during the transition from mitosis into interphase. Together with ZC3H4, but independently of the SET1 complex, part of a transcription termination checkpoint that promotes transcription termination of long non-coding RNAs (lncRNAs). The transcription termination checkpoint is activated by the inefficiently spliced first exon of lncRNAs and promotes transcription termination of lncRNAs and their subsequent degradation by the exosome. The protein is WD repeat-containing protein 82 of Homo sapiens (Human).